A 107-amino-acid polypeptide reads, in one-letter code: Phosphoribosyl-ATP pyrophosphatase (107 aa).

This sequence belongs to the PRA-PH family.

It localises to the cytoplasm. The enzyme catalyses 1-(5-phospho-beta-D-ribosyl)-ATP + H2O = 1-(5-phospho-beta-D-ribosyl)-5'-AMP + diphosphate + H(+). Its pathway is amino-acid biosynthesis; L-histidine biosynthesis; L-histidine from 5-phospho-alpha-D-ribose 1-diphosphate: step 2/9. The polypeptide is Phosphoribosyl-ATP pyrophosphatase (Neisseria gonorrhoeae (strain ATCC 700825 / FA 1090)).